The following is a 75-amino-acid chain: uncharacterized protein (75 aa).

This is an uncharacterized protein from Bacillus subtilis (strain 168).